The sequence spans 1133 residues: MDELPFGEAAVEQALDELGELDAALLTDIQDMLQLINNQDSDFPGLFDSPYAGGGAGDTEPTSPGANSPESLSSPASLGSSLEAFLGEPKATPASLSPVPSASTALKMYPSVPPFSPGPGIKEEPVPLTILQPPAAQPSPGTLLPPSFPPPPLQLSPAPVLGYSSLPSGFSGTLPGNTQQPPSSLSLASAPGVSPISLHTQVQSSASQQPLPASTAPRTTTVTSQIQRVPVVLQPHFIKADSLLLTTVKTDTGATMKTAGISTLAPGTAVQAGPLQTLVSGGTILATVPLVVDTDKLPIHRLAAGSKALGSAQSRGEKRTAHNAIEKRYRSSINDKIVELKDLVVGTEAKLNKSAVLRKAIDYIRFLQHSNQKLKQENLALRNAAHKSKSLKDLVSACGSAGGTDVAMEGVKPEVVDTLTPPPSDAGSPSQSSPLSLGSRGSSSGGSDSEPDSPVFEDSQVKAQRLHSHGMLDRSRLALCALVFLCLTCNPLASLFGWGIPGPSSASGAHHSSGRSMLEAESRDGSNWTQWLLPPLVWLANGLLVLACLALLFVYGEPVTRPHTSPAVHFWRHRKQADLDLARGDFAQAAQQLWLALQALGRPLPTSNLDLACSLLWNLIRHLLQRLWVGRWLAGRAGGLRRDCGLRMDARASARDAALVYHKLHQLHAMGKYTGGHLIASNLALSALNLAECAGDAVSMATLAEIYVAAALRVKTSLPRALHFLTRFFLSSARQACLAQSGSVPLAMQWLCHPVGHRFFVDGDWAVHGAPQESLYSVAGNPVDPLAQVTRLFCEHLLERALNCIAQPSPGTADGDREFSDALGYLQLLNRCSDAVGTPACSFSVSSSMASTTGTDPVAKWWASLTAVVIHWLRRDEEAAERLYPLVERMPHVLQETERPLPKAALYSFKAARALLDHRKVESGPASLAICEKASGYLRDSLAAPPTGSSIDKAMQLLLCDLLLVARTSMWQRQQSPASAQVAHSASNGSQASALELRGFQQDLSSLRRLAQNFRPAMRRVFLHEATARLMAGASPARTHQLLDRSLRRRAGSSGKGGTVAELEPRPTWREHTEALLLASCYLPPAFLSAPGQQMSMLAEAARTVEKLGDHRLLLDCQQMLLRLGGGTTVTSS.

Residues 1–60 (MDELPFGEAAVEQALDELGELDAALLTDIQDMLQLINNQDSDFPGLFDSPYAGGGAGDTE) are transcriptional activation (acidic). At 1-476 (MDELPFGEAA…HSHGMLDRSR (476 aa)) the chain is on the cytoplasmic side. The short motif at 27-35 (TDIQDMLQL) is the 9aaTAD element. The disordered stretch occupies residues 46–78 (LFDSPYAGGGAGDTEPTSPGANSPESLSSPASL). The span at 68–78 (SPESLSSPASL) shows a compositional bias: low complexity. Residues Ser-97 and Ser-116 each carry the phosphoserine modification. Positions 131-219 (LQPPAAQPSP…PLPASTAPRT (89 aa)) are disordered. Over residues 165–180 (SLPSGFSGTLPGNTQQ) the composition is skewed to polar residues. Composition is skewed to low complexity over residues 181–191 (PPSSLSLASAP) and 203–217 (QSSA…STAP). The segment at 227–486 (QRVPVVLQPH…LALCALVFLC (260 aa)) is interaction with LMNA. Positions 317–367 (EKRTAHNAIEKRYRSSINDKIVELKDLVVGTEAKLNKSAVLRKAIDYIRFL) constitute a bHLH domain. Phosphoserine; by SIK1 is present on residues Ser-331 and Ser-332. A leucine-zipper region spans residues 367-388 (LQHSNQKLKQENLALRNAAHKS). Ser-390 is modified (phosphoserine; by AMPK). At Ser-396 the chain carries Phosphoserine; by SIK1. The disordered stretch occupies residues 415–456 (VVDTLTPPPSDAGSPSQSSPLSLGSRGSSSGGSDSEPDSPVF). Residues 425 to 454 (DAGSPSQSSPLSLGSRGSSSGGSDSEPDSP) are compositionally biased toward low complexity. Ser-449 carries the post-translational modification Phosphoserine. The chain crosses the membrane as a helical span at residues 477–497 (LALCALVFLCLTCNPLASLFG). Residues 498-535 (WGIPGPSSASGAHHSSGRSMLEAESRDGSNWTQWLLPP) lie on the Lumenal side of the membrane. A helical membrane pass occupies residues 536 to 556 (LVWLANGLLVLACLALLFVYG). Over 557 to 1133 (EPVTRPHTSP…LGGGTTVTSS (577 aa)) the chain is Cytoplasmic. Ser-1046 carries the phosphoserine modification.

Belongs to the SREBP family. As to quaternary structure, efficient DNA binding of the soluble transcription factor fragment requires dimerization with another bHLH protein. Interacts with CEBPA, the interaction produces a transcriptional synergy. Interacts with LMNA. In terms of assembly, forms a tight complex with SCAP, the SCAP-SREBP complex, in the endoplasmic reticulum membrane and the Golgi apparatus. Interacts with PAQR3; the interaction anchors the SCAP-SREBP complex to the Golgi apparatus in low cholesterol conditions. Post-translationally, processed in the Golgi apparatus, releasing the protein from the membrane. At low cholesterol the SCAP-SREBP complex is recruited into COPII vesicles for export from the endoplasmic reticulum. In the Golgi, complex SREBPs are cleaved sequentially by site-1 (MBTPS1, S1P) and site-2 (MBTPS2, S2P) proteases. The first cleavage by site-1 protease occurs within the luminal loop, the second cleavage by site-2 protease occurs within the first transmembrane domain, releasing the transcription factor from the Golgi membrane. Phosphorylated by AMPK, leading to suppress protein processing and nuclear translocation, and repress target gene expression. Phosphorylation at Ser-396 by SIK1 represses activity possibly by inhibiting DNA-binding. In terms of processing, SCAP-free SREBF1 is ubiquitinated by the BCR(ARMC5) complex, leading to its degradation. Post-translationally, ubiquitinated; the nuclear form has a rapid turnover and is rapidly ubiquitinated and degraded by the proteasome in the nucleus.

The protein localises to the endoplasmic reticulum membrane. It is found in the golgi apparatus membrane. Its subcellular location is the cytoplasmic vesicle. It localises to the COPII-coated vesicle membrane. The protein resides in the nucleus. Activation by cleavage is down-regulated upon activation of SIRT3-dependent PRKAA1/AMPK-alpha signaling cascade which leads to inhibition of ATP-consuming lipogenesis to restore cellular energy balance. In terms of biological role, precursor of the transcription factor form (Processed sterol regulatory element-binding protein 1), which is embedded in the endoplasmic reticulum membrane. Low sterol concentrations promote processing of this form, releasing the transcription factor form that translocates into the nucleus and activates transcription of genes involved in cholesterol biosynthesis and lipid homeostasis. Functionally, key transcription factor that regulates expression of genes involved in cholesterol biosynthesis and lipid homeostasis. Binds to the sterol regulatory element 1 (SRE-1) (5'-ATCACCCCAC-3'). Has dual sequence specificity binding to both an E-box motif (5'-ATCACGTGA-3') and to SRE-1 (5'-ATCACCCCAC-3'). Regulates the promoters of genes involved in cholesterol biosynthesis and the LDL receptor (LDLR) pathway of sterol regulation. The sequence is that of Sterol regulatory element-binding protein 1 from Cricetulus griseus (Chinese hamster).